Reading from the N-terminus, the 159-residue chain is Ribosomal RNA large subunit methyltransferase H (159 aa).

S-adenosyl-L-methionine contacts are provided by residues Leu76, Gly108, and 127 to 132; that span reads FGLLTL.

Belongs to the RNA methyltransferase RlmH family. Homodimer.

It is found in the cytoplasm. It catalyses the reaction pseudouridine(1915) in 23S rRNA + S-adenosyl-L-methionine = N(3)-methylpseudouridine(1915) in 23S rRNA + S-adenosyl-L-homocysteine + H(+). In terms of biological role, specifically methylates the pseudouridine at position 1915 (m3Psi1915) in 23S rRNA. This Streptococcus equi subsp. zooepidemicus (strain H70) protein is Ribosomal RNA large subunit methyltransferase H.